The primary structure comprises 500 residues: Glutamate--tRNA ligase (500 aa).

The short motif at 12-22 is the 'HIGH' region element; sequence PSPTGHLHIGN. Residues 259–263 carry the 'KMSKS' region motif; sequence KLSKR. ATP is bound at residue lysine 262.

Belongs to the class-I aminoacyl-tRNA synthetase family. Glutamate--tRNA ligase type 1 subfamily. In terms of assembly, monomer.

The protein localises to the cytoplasm. The enzyme catalyses tRNA(Glu) + L-glutamate + ATP = L-glutamyl-tRNA(Glu) + AMP + diphosphate. Its function is as follows. Catalyzes the attachment of glutamate to tRNA(Glu) in a two-step reaction: glutamate is first activated by ATP to form Glu-AMP and then transferred to the acceptor end of tRNA(Glu). In Lactobacillus delbrueckii subsp. bulgaricus (strain ATCC BAA-365 / Lb-18), this protein is Glutamate--tRNA ligase.